The following is a 389-amino-acid chain: Rhizopuspepsin-1 (389 aa).

An N-terminal signal peptide occupies residues 1–21 (MKFTLISSCVALAAMTLAVEA). A propeptide spans 22–66 (APNGKKINIPLAKNNSYKPSAKNALNKALAKYNRRKVGSGGITTE) (activation peptide). The Peptidase A1 domain maps to 82–385 (YYGEVTVGTP…NQEVPEVQIA (304 aa)). The active site involves Asp-100. A disulfide bridge links Cys-113 with Cys-116. Asp-283 is a catalytic residue. Cys-317 and Cys-350 form a disulfide bridge.

It belongs to the peptidase A1 family.

The enzyme catalyses Hydrolysis of proteins with broad specificity similar to that of pepsin A, preferring hydrophobic residues at P1 and P1'. Clots milk and activates trypsinogen. Does not cleave 4-Gln-|-His-5, but does cleave 10-His-|-Leu-11 and 12-Val-|-Glu-13 in B chain of insulin.. In Rhizopus niveus, this protein is Rhizopuspepsin-1 (RNAP).